An 821-amino-acid polypeptide reads, in one-letter code: DNA ligase (821 aa).

Residues 50-54 (DAEYD), 99-100 (SL), and Glu140 contribute to the NAD(+) site. The active-site N6-AMP-lysine intermediate is Lys142. Residues Arg163, Glu200, Lys319, and Lys343 each contribute to the NAD(+) site. Residues Cys452, Cys455, Cys470, and Cys476 each coordinate Zn(2+). Residues 742 to 821 (AAALPLEGKT…AGLQALLAGN (80 aa)) form the BRCT domain.

This sequence belongs to the NAD-dependent DNA ligase family. LigA subfamily. Mg(2+) serves as cofactor. The cofactor is Mn(2+).

The enzyme catalyses NAD(+) + (deoxyribonucleotide)n-3'-hydroxyl + 5'-phospho-(deoxyribonucleotide)m = (deoxyribonucleotide)n+m + AMP + beta-nicotinamide D-nucleotide.. Its function is as follows. DNA ligase that catalyzes the formation of phosphodiester linkages between 5'-phosphoryl and 3'-hydroxyl groups in double-stranded DNA using NAD as a coenzyme and as the energy source for the reaction. It is essential for DNA replication and repair of damaged DNA. This chain is DNA ligase, found in Chromobacterium violaceum (strain ATCC 12472 / DSM 30191 / JCM 1249 / CCUG 213 / NBRC 12614 / NCIMB 9131 / NCTC 9757 / MK).